The following is a 159-amino-acid chain: Ribosomal RNA large subunit methyltransferase H (159 aa).

S-adenosyl-L-methionine contacts are provided by residues L76, G107, and 126–131 (LSKLTM).

It belongs to the RNA methyltransferase RlmH family. In terms of assembly, homodimer.

The protein resides in the cytoplasm. It carries out the reaction pseudouridine(1915) in 23S rRNA + S-adenosyl-L-methionine = N(3)-methylpseudouridine(1915) in 23S rRNA + S-adenosyl-L-homocysteine + H(+). Its function is as follows. Specifically methylates the pseudouridine at position 1915 (m3Psi1915) in 23S rRNA. The chain is Ribosomal RNA large subunit methyltransferase H from Acinetobacter baumannii (strain AB307-0294).